The sequence spans 281 residues: MKVLWAALLIALLAGCQGKMEQVVEPELEPEPELHQQADWQSGQPWELALGRFWDYLRWVQTLSEQVQEELLSSQVTQELTALMDETMKELKAYKSELEEQLSPVAEETRARLSKELQAAQARLGADMEDVRSRLAQYRSEVQAMLGQSTDELRARLTSHLRKLRTVSYTHLDVYKRQSLASQPLQERAQAWGERLRTRMEEVGSRTRDRLDEVKEQVEEVRAKLEEQAQQMRLQAEAFQARLKSWFEPLVEDMQRQWAGLVEKVQAAVGASAAPVPSDNH.

An N-terminal signal peptide occupies residues 1-18 (MKVLWAALLIALLAGCQG). Repeat copies occupy residues 82-103 (ALMD…EQLS), 104-125 (PVAE…ARLG), 126-147 (ADME…AMLG), 148-169 (QSTD…TVSY), and 198-219 (TRME…EQVE). The tract at residues 82-219 (ALMDETMKEL…RLDEVKEQVE (138 aa)) is 5 X 22 AA approximate tandem repeats. M145 is modified (methionine sulfoxide). S149 bears the Phosphoserine mark. The LDL and other lipoprotein receptors binding stretch occupies residues 160-170 (HLRKLRTVSYT). Heparin-binding positions include 164-167 (LRTV) and 193-200 (GERLRTRM). Residues 230 to 281 (QQMRLQAEAFQARLKSWFEPLVEDMQRQWAGLVEKVQAAVGASAAPVPSDNH) are homooligomerization. Residues 242–254 (RLKSWFEPLVEDM) are specificity for association with VLDL.

Belongs to the apolipoprotein A1/A4/E family. In terms of assembly, homotetramer. May interact with ABCA1; functionally associated with ABCA1 in the biogenesis of HDLs. May interact with APP/A4 amyloid-beta peptide; the interaction is extremely stable in vitro but its physiological significance is unclear. May interact with MAPT. May interact with MAP2. In the cerebrospinal fluid, interacts with secreted SORL1. Interacts with PMEL; this allows the loading of PMEL luminal fragment on ILVs to induce fibril nucleation. Post-translationally, APOE exists as multiple glycosylated and sialylated glycoforms within cells and in plasma. The extent of glycosylation and sialylation are tissue and context specific. In terms of processing, glycated in plasma VLDL. Phosphorylated by FAM20C in the extracellular medium.

The protein resides in the secreted. Its subcellular location is the extracellular space. It localises to the extracellular matrix. The protein localises to the extracellular vesicle. It is found in the endosome. The protein resides in the multivesicular body. APOE is an apolipoprotein, a protein associating with lipid particles, that mainly functions in lipoprotein-mediated lipid transport between organs via the plasma and interstitial fluids. APOE is a core component of plasma lipoproteins and is involved in their production, conversion and clearance. Apolipoproteins are amphipathic molecules that interact both with lipids of the lipoprotein particle core and the aqueous environment of the plasma. As such, APOE associates with chylomicrons, chylomicron remnants, very low density lipoproteins (VLDL) and intermediate density lipoproteins (IDL) but shows a preferential binding to high-density lipoproteins (HDL). It also binds a wide range of cellular receptors including the LDL receptor/LDLR, the LDL receptor-related proteins LRP1, LRP2 and LRP8 and the very low-density lipoprotein receptor/VLDLR that mediate the cellular uptake of the APOE-containing lipoprotein particles. Finally, APOE also has a heparin-binding activity and binds heparan-sulfate proteoglycans on the surface of cells, a property that supports the capture and the receptor-mediated uptake of APOE-containing lipoproteins by cells. A main function of APOE is to mediate lipoprotein clearance through the uptake of chylomicrons, VLDLs, and HDLs by hepatocytes. APOE is also involved in the biosynthesis by the liver of VLDLs as well as their uptake by peripheral tissues ensuring the delivery of triglycerides and energy storage in muscle, heart and adipose tissues. By participating in the lipoprotein-mediated distribution of lipids among tissues, APOE plays a critical role in plasma and tissues lipid homeostasis. APOE is also involved in two steps of reverse cholesterol transport, the HDLs-mediated transport of cholesterol from peripheral tissues to the liver, and thereby plays an important role in cholesterol homeostasis. First, it is functionally associated with ABCA1 in the biogenesis of HDLs in tissues. Second, it is enriched in circulating HDLs and mediates their uptake by hepatocytes. APOE also plays an important role in lipid transport in the central nervous system, regulating neuron survival and sprouting. The protein is Apolipoprotein E (APOE) of Aotus nancymaae (Ma's night monkey).